The primary structure comprises 189 residues: Crossover junction endodeoxyribonuclease RuvC (189 aa).

Active-site residues include aspartate 9, glutamate 70, and aspartate 143. Positions 9, 70, and 143 each coordinate Mg(2+). The segment covering 162–178 has biased composition (low complexity); that stretch reads MGAASGNSSLTPAQKAW. Positions 162–189 are disordered; the sequence is MGAASGNSSLTPAQKAWADAEAKARRKR. The span at 179–189 shows a compositional bias: basic and acidic residues; sequence ADAEAKARRKR.

The protein belongs to the RuvC family. In terms of assembly, homodimer which binds Holliday junction (HJ) DNA. The HJ becomes 2-fold symmetrical on binding to RuvC with unstacked arms; it has a different conformation from HJ DNA in complex with RuvA. In the full resolvosome a probable DNA-RuvA(4)-RuvB(12)-RuvC(2) complex forms which resolves the HJ. Mg(2+) is required as a cofactor.

The protein resides in the cytoplasm. It carries out the reaction Endonucleolytic cleavage at a junction such as a reciprocal single-stranded crossover between two homologous DNA duplexes (Holliday junction).. Functionally, the RuvA-RuvB-RuvC complex processes Holliday junction (HJ) DNA during genetic recombination and DNA repair. Endonuclease that resolves HJ intermediates. Cleaves cruciform DNA by making single-stranded nicks across the HJ at symmetrical positions within the homologous arms, yielding a 5'-phosphate and a 3'-hydroxyl group; requires a central core of homology in the junction. The consensus cleavage sequence is 5'-(A/T)TT(C/G)-3'. Cleavage occurs on the 3'-side of the TT dinucleotide at the point of strand exchange. HJ branch migration catalyzed by RuvA-RuvB allows RuvC to scan DNA until it finds its consensus sequence, where it cleaves and resolves the cruciform DNA. This is Crossover junction endodeoxyribonuclease RuvC from Paenarthrobacter aurescens (strain TC1).